The following is a 400-amino-acid chain: Serpin E3 (400 aa).

An N-terminal signal peptide occupies residues 1–19; it reads MQSLLLALLLLPVCSPGGA. N-linked (GlcNAc...) asparagine glycosylation occurs at N46.

Belongs to the serpin family.

The protein resides in the secreted. Functionally, probable serine protease inhibitor. The protein is Serpin E3 (SERPINE3) of Bos taurus (Bovine).